Consider the following 306-residue polypeptide: GTP cyclohydrolase FolE2 (306 aa).

It belongs to the GTP cyclohydrolase IV family.

It carries out the reaction GTP + H2O = 7,8-dihydroneopterin 3'-triphosphate + formate + H(+). It functions in the pathway cofactor biosynthesis; 7,8-dihydroneopterin triphosphate biosynthesis; 7,8-dihydroneopterin triphosphate from GTP: step 1/1. In terms of biological role, converts GTP to 7,8-dihydroneopterin triphosphate. The chain is GTP cyclohydrolase FolE2 from Xanthomonas oryzae pv. oryzae (strain MAFF 311018).